Consider the following 250-residue polypeptide: MAWQVSLLELEDRLQCPICLEVFKESLMLQCGHSYCKGCLVSLSYHLDTKVRCPMCWQVVDGSSSLPNVSLAWVIEALRLPGDPEPKVCVHHRNPLSLFCEKDQELICGLCGLLGSHQHHPVTPVSTVCSRMKEELAALFSELKQEQKKVDELIAKLVKNRTRIVNESDVFSWVIRREFQELRHPVDEEKARCLEGIGGHTRGLVASLDMQLEQAQGTRERLAQAECVLEQFGNEDHHEFIWKFHSMASR.

An RING-type zinc finger spans residues 16–57 (CPICLEVFKESLMLQCGHSYCKGCLVSLSYHLDTKVRCPMCW). The segment at 84–125 (PEPKVCVHHRNPLSLFCEKDQELICGLCGLLGSHQHHPVTPV) adopts a B box-type zinc-finger fold. Cys89, His92, Cys111, and His117 together coordinate Zn(2+). Coiled-coil stretches lie at residues 125–169 (VSTV…NESD) and 204–235 (LVAS…FGNE).

It belongs to the TRIM/RBCC family.

This is Tripartite motif-containing protein 73 (TRIM73) from Homo sapiens (Human).